We begin with the raw amino-acid sequence, 310 residues long: 26S proteasome non-ATPase regulatory subunit 7 homolog B (310 aa).

The residue at position 1 (methionine 1) is an N-acetylmethionine. Residues 17 to 154 form the MPN domain; it reads VIVHPLVLLS…YYAVEEVKEN (138 aa).

This sequence belongs to the peptidase M67A family. In terms of assembly, component of the 19S regulatory particle (RP/PA700) lid subcomplex of the 26S proteasome. The 26S proteasome is composed of a core protease (CP), known as the 20S proteasome, capped at one or both ends by the 19S regulatory particle (RP/PA700). The RP/PA700 complex is composed of at least 17 different subunits in two subcomplexes, the base and the lid, which form the portions proximal and distal to the 20S proteolytic core, respectively.

Its function is as follows. Acts as a regulatory subunit of the 26S proteasome which is involved in the ATP-dependent degradation of ubiquitinated proteins. The chain is 26S proteasome non-ATPase regulatory subunit 7 homolog B (RPN8B) from Arabidopsis thaliana (Mouse-ear cress).